The following is a 385-amino-acid chain: Gibberellin 20 oxidase 5 (385 aa).

The 101-residue stretch at 224 to 324 (DGSGIFRCNY…RRSLVFFSCP (101 aa)) folds into the Fe2OG dioxygenase domain. 3 residues coordinate Fe cation: His249, Asp251, and His305. The active site involves Arg315.

It belongs to the iron/ascorbate-dependent oxidoreductase family. GA20OX subfamily. Fe(2+) serves as cofactor. The cofactor is L-ascorbate. Expressed in 3-day-old seedlings and siliques. Detected in dry seeds, roots, old leaves and inflorescences.

It catalyses the reaction gibberellin A12 + 2 2-oxoglutarate + 3 O2 + H(+) = gibberellin A9 + 2 succinate + 3 CO2 + 2 H2O. The enzyme catalyses gibberellin A53 + 2 2-oxoglutarate + 3 O2 + H(+) = gibberellin A20 + 2 succinate + 3 CO2 + 2 H2O. It participates in plant hormone biosynthesis; gibberellin biosynthesis. Key oxidase enzyme in the biosynthesis of gibberellin that catalyzes the conversion of GA12 and GA53 to GA9 and GA20 respectively, via a three-step oxidation at C-20 of the GA skeleton. This Arabidopsis thaliana (Mouse-ear cress) protein is Gibberellin 20 oxidase 5 (GA20OX5).